The primary structure comprises 300 residues: ADP-polyphosphate phosphotransferase 1 (300 aa).

The protein belongs to the polyphosphate kinase 2 (PPK2) family. Class I subfamily. In terms of assembly, homotetramer. Requires Mg(2+) as cofactor.

It catalyses the reaction [phosphate](n) + ATP = [phosphate](n+1) + ADP. It carries out the reaction [phosphate](n) + GTP = [phosphate](n+1) + GDP. In terms of biological role, uses inorganic polyphosphate (polyP) as a donor to convert ADP to ATP. Can also convert GDP to GTP, with lower efficiency. Cannot dephosphorylate ATP in the presence of polyP. The polypeptide is ADP-polyphosphate phosphotransferase 1 (Rhizobium meliloti (strain 1021) (Ensifer meliloti)).